Here is a 479-residue protein sequence, read N- to C-terminus: Membrane-bound lytic murein transglycosylase F (479 aa).

Residues 1-18 (MKGLFIRIVLAICLSLWA) form the signal peptide. Residues 19–266 (IDMVFPWQQI…RIEEKYFNHL (248 aa)) form a non-LT domain region. The segment at 267 to 479 (NQFDYVDTRS…ISTQTQQEQR (213 aa)) is LT domain. E311 is an active-site residue.

The protein in the N-terminal section; belongs to the bacterial solute-binding protein 3 family. In the C-terminal section; belongs to the transglycosylase Slt family.

It is found in the cell outer membrane. The enzyme catalyses Exolytic cleavage of the (1-&gt;4)-beta-glycosidic linkage between N-acetylmuramic acid (MurNAc) and N-acetylglucosamine (GlcNAc) residues in peptidoglycan, from either the reducing or the non-reducing ends of the peptidoglycan chains, with concomitant formation of a 1,6-anhydrobond in the MurNAc residue.. Functionally, murein-degrading enzyme that degrades murein glycan strands and insoluble, high-molecular weight murein sacculi, with the concomitant formation of a 1,6-anhydromuramoyl product. Lytic transglycosylases (LTs) play an integral role in the metabolism of the peptidoglycan (PG) sacculus. Their lytic action creates space within the PG sacculus to allow for its expansion as well as for the insertion of various structures such as secretion systems and flagella. The sequence is that of Membrane-bound lytic murein transglycosylase F from Histophilus somni (strain 2336) (Haemophilus somnus).